The sequence spans 448 residues: tRNA modification GTPase MnmE (448 aa).

Positions 24, 81, and 120 each coordinate (6S)-5-formyl-5,6,7,8-tetrahydrofolate. The TrmE-type G domain maps to 216–373; it reads GLNVVLVGAP…LKRTLLREAG (158 aa). N226 lines the K(+) pocket. GTP-binding positions include 226–231, 245–251, and 270–273; these read NVGKSS, TDIAGTT, and DTAG. Position 230 (S230) interacts with Mg(2+). Positions 245, 247, and 250 each coordinate K(+). T251 provides a ligand contact to Mg(2+). K448 serves as a coordination point for (6S)-5-formyl-5,6,7,8-tetrahydrofolate.

This sequence belongs to the TRAFAC class TrmE-Era-EngA-EngB-Septin-like GTPase superfamily. TrmE GTPase family. Homodimer. Heterotetramer of two MnmE and two MnmG subunits. Requires K(+) as cofactor.

Its subcellular location is the cytoplasm. Functionally, exhibits a very high intrinsic GTPase hydrolysis rate. Involved in the addition of a carboxymethylaminomethyl (cmnm) group at the wobble position (U34) of certain tRNAs, forming tRNA-cmnm(5)s(2)U34. The polypeptide is tRNA modification GTPase MnmE (Neisseria meningitidis serogroup C (strain 053442)).